The sequence spans 4158 residues: Dynein axonemal heavy chain 6 (4158 aa).

Residues 1-1433 (MTFRATDSEF…VARMALSQYT (1433 aa)) are stem. ATP is bound at residue 192–199 (IIRENEHL). The stretch at 805 to 859 (CVHLGSDLEELNNEVNEVKLQAQDPQILDISADQDKIRLILNNLQSVLADLQKRA) forms a coiled coil. AAA stretches follow at residues 1434 to 1655 (YGYE…VLVM), 1715 to 1948 (STIV…KKCS), 2058 to 2306 (KYNR…CVQG), and 2408 to 2659 (DYNL…LRRR). ATP-binding positions include 1472 to 1479 (GPAGTGKT), 1753 to 1760 (GPTGGGKT), 2096 to 2103 (GITGVGKS), and 2447 to 2454 (GVGGTGKQ). The segment at 2676–2961 (SMLSEKRKQI…KTMALTKARL (286 aa)) is stalk. Positions 2901 to 2996 (KRQKLRAAQA…EEISNITGNV (96 aa)) form a coiled coil. 2 AAA regions span residues 3042 to 3272 (LGDP…AIKT) and 3509 to 3730 (LTDF…NLKL).

It belongs to the dynein heavy chain family. As to quaternary structure, the dynein complex consists of at least two heavy chains and a number of intermediate and light chains. As to expression, expressed in several tissues, including brain, pituitary, testis and trachea, with highest levels in testis.

The protein localises to the cytoplasm. Its subcellular location is the cytoskeleton. It localises to the cilium axoneme. Functionally, force generating protein of respiratory cilia. Produces force towards the minus ends of microtubules. Dynein has ATPase activity; the force-producing power stroke is thought to occur on release of ADP. The sequence is that of Dynein axonemal heavy chain 6 from Homo sapiens (Human).